Reading from the N-terminus, the 423-residue chain is Polyglutamylase complex subunit TTLL1 (423 aa).

The TTL domain maps to 1–367; that stretch reads MAGRVKWVTD…NGEIPDCKWN (367 aa). ATP contacts are provided by residues Lys-138, 144-145, 181-184, and 194-196; these read QG, SLYI, and KFD. Residue Gln-144 coordinates a protein. L-glutamate is bound at residue Arg-220. An ATP-binding site is contributed by 241–242; sequence TN. Residue Lys-259 participates in L-glutamate binding. The Mg(2+) site is built by Asp-313, Glu-326, and Asn-328. Residue Lys-344 coordinates L-glutamate. A disordered region spans residues 390–423; that stretch reads DGAERELRSRPGQPVGPRTGRSRDSGRNVLTTWK.

Belongs to the tubulin polyglutamylase family. As to quaternary structure, part of the neuronal tubulin polyglutamylase complex which contains TPGS1, TPGS2, TTLL1, LRRC49 and NICN1. Interacts with PCM1, CSTPP1 and LRRC49. It depends on Mg(2+) as a cofactor.

The protein resides in the cytoplasm. The protein localises to the cytoskeleton. It localises to the cilium basal body. It is found in the cilium axoneme. Its subcellular location is the cell projection. The protein resides in the cilium. The protein localises to the flagellum. It carries out the reaction (L-glutamyl)(n)-gamma-L-glutamyl-L-glutamyl-[protein] + L-glutamate + ATP = (L-glutamyl)(n+1)-gamma-L-glutamyl-L-glutamyl-[protein] + ADP + phosphate + H(+). In terms of biological role, catalytic subunit of a polyglutamylase complex which modifies tubulin, generating side chains of glutamate on the gamma-carboxyl group of specific glutamate residues within the C-terminal tail of tubulin. Probably involved in the side-chain elongation step of the polyglutamylation reaction rather than the initiation step. Modifies both alpha- and beta-tubulins with a preference for the alpha-tail. Unlike most polyglutamylases of the tubulin--tyrosine ligase family, only displays a catalytic activity when in complex with other proteins as it is most likely lacking domains important for autonomous activity. Part of the neuronal tubulin polyglutamylase complex. Mediates cilia and flagella polyglutamylation which is essential for their biogenesis and motility. Involved in respiratory motile cilia function through the regulation of beating asymmetry. Essential for sperm flagella biogenesis, motility and male fertility. Involved in KLF4 glutamylation which impedes its ubiquitination, thereby leading to somatic cell reprogramming, pluripotency maintenance and embryogenesis. This is Polyglutamylase complex subunit TTLL1 (Ttll1) from Rattus norvegicus (Rat).